The sequence spans 94 residues: Small ribosomal subunit protein uS19 (94 aa).

It belongs to the universal ribosomal protein uS19 family.

Functionally, protein S19 forms a complex with S13 that binds strongly to the 16S ribosomal RNA. The protein is Small ribosomal subunit protein uS19 of Buchnera aphidicola subsp. Cinara cedri (strain Cc).